Here is a 174-residue protein sequence, read N- to C-terminus: MASKSLFLVALLVGSFAFTSFASVANRKLKSGLEDQKTFFHHPGGGLGGGGGIGGGSGLGGGGGFGGGGGLGGGAGGGGGLGGGAGGGAGGGFGGGAGSGGGLGGGGGAGGGFGGGAGGGSGGGFGGGAGAGGGLGGGGGAGGGGGFGGGGGSGIGGGFGGGAGAGGGFGGGHH.

An N-terminal signal peptide occupies residues 1 to 22; that stretch reads MASKSLFLVALLVGSFAFTSFA.

As to expression, mostly expressed in immature seed pods, and, to a lower extent, in stems and leaves. Present in phloem and epiderm in leaves, stems, flowers and fruits.

The protein resides in the vacuole. In terms of biological role, involved in organ growth by promoting cell elongation processes. This Arabidopsis thaliana (Mouse-ear cress) protein is Glycine-rich protein 5.